A 77-amino-acid chain; its full sequence is Conotoxin King-Kong 1 (77 aa).

The first 22 residues, 1–22 (MKLTCMMIVAVLFLTAWTFATA), serve as a signal peptide directing secretion. Residues 23-49 (DDSSNGLENLFSKAHHEMKNPEASKLN) constitute a propeptide that is removed on maturation. 3 disulfide bridges follow: cysteine 52–cysteine 67, cysteine 59–cysteine 71, and cysteine 66–cysteine 76. The residue at position 61 (methionine 61) is a Methionine sulfoxide; partial.

Belongs to the conotoxin O1 superfamily. Expressed by the venom duct.

Its subcellular location is the secreted. The chain is Conotoxin King-Kong 1 from Conus textile (Cloth-of-gold cone).